The chain runs to 258 residues: Gamma-secretase subunit Aph-1b (258 aa).

A run of 7 helical transmembrane segments spans residues 3-23, 32-52, 70-90, 118-138, 161-181, 187-207, and 214-234; these read VAVF…LFMF, VIFL…SSLV, GLLI…RYGY, AYVS…VNIL, AFMT…FFEA, WWAL…TFVN, and LIPT…CAGG.

The protein belongs to the APH-1 family. In terms of assembly, component of the gamma-secretase complex, a complex composed of a presenilin homodimer (PSEN1 or PSEN2), nicastrin (NCSTN), APH1 and PEN2.

It localises to the membrane. Functionally, essential subunit of the gamma-secretase complex, an endoprotease complex that catalyzes the intramembrane cleavage of integral proteins such as Notch receptors. It may represent a stabilizing cofactor for the presenilin homodimer that promotes the formation of a stable complex. The polypeptide is Gamma-secretase subunit Aph-1b (aph1b) (Danio rerio (Zebrafish)).